We begin with the raw amino-acid sequence, 95 residues long: MRTLALLAAILLVTLQAQAELHSGMADDGVDQQQPRAQDLDVAVYIKQDETSPLEVLGAKAGVSCTCRRFSCGFGERASGSCTVNGVRHTLCCRR.

The first 19 residues, 1 to 19 (MRTLALLAAILLVTLQAQA), serve as a signal peptide directing secretion. Positions 20–62 (ELHSGMADDGVDQQQPRAQDLDVAVYIKQDETSPLEVLGAKAG) are excised as a propeptide. Intrachain disulfides connect Cys-65-Cys-93, Cys-67-Cys-82, and Cys-72-Cys-92.

Belongs to the alpha-defensin family.

The protein resides in the secreted. Microbicidal activity. This chain is Neutrophil antibiotic peptide NP-4, found in Oryctolagus cuniculus (Rabbit).